Here is a 213-residue protein sequence, read N- to C-terminus: Pyridoxine/pyridoxamine 5'-phosphate oxidase (213 aa).

Substrate is bound by residues 10 to 13 (REEY) and Lys68. Residues 63-68 (RMLLLK), 78-79 (FT), Lys85, and Gln107 contribute to the FMN site. Residues Tyr125, Arg129, and Ser133 each contribute to the substrate site. Residues 142–143 (QS) and Trp186 each bind FMN. Residue 192-194 (RLH) coordinates substrate. Arg196 contacts FMN.

This sequence belongs to the pyridoxamine 5'-phosphate oxidase family. In terms of assembly, homodimer. FMN is required as a cofactor.

It carries out the reaction pyridoxamine 5'-phosphate + O2 + H2O = pyridoxal 5'-phosphate + H2O2 + NH4(+). The catalysed reaction is pyridoxine 5'-phosphate + O2 = pyridoxal 5'-phosphate + H2O2. It participates in cofactor metabolism; pyridoxal 5'-phosphate salvage; pyridoxal 5'-phosphate from pyridoxamine 5'-phosphate: step 1/1. It functions in the pathway cofactor metabolism; pyridoxal 5'-phosphate salvage; pyridoxal 5'-phosphate from pyridoxine 5'-phosphate: step 1/1. Functionally, catalyzes the oxidation of either pyridoxine 5'-phosphate (PNP) or pyridoxamine 5'-phosphate (PMP) into pyridoxal 5'-phosphate (PLP). The polypeptide is Pyridoxine/pyridoxamine 5'-phosphate oxidase (Nocardioides sp. (strain ATCC BAA-499 / JS614)).